Reading from the N-terminus, the 862-residue chain is Glucans biosynthesis glucosyltransferase H (862 aa).

Positions 1-25 (MELPATSGLNAQPGNAEGTTASTRP) are disordered. The segment covering 7 to 25 (SGLNAQPGNAEGTTASTRP) has biased composition (polar residues). The next 5 helical transmembrane spans lie at 188-210 (RLTL…SSVL), 545-567 (GVMA…ALLA), 597-619 (ALFS…VLWA), 626-648 (GGAV…AAPV), and 708-730 (FLWW…VFSS).

The protein belongs to the glycosyltransferase 2 family. OpgH subfamily.

The protein resides in the cell inner membrane. The protein operates within glycan metabolism; osmoregulated periplasmic glucan (OPG) biosynthesis. Its function is as follows. Involved in the biosynthesis of osmoregulated periplasmic glucans (OPGs). The chain is Glucans biosynthesis glucosyltransferase H from Ralstonia nicotianae (strain ATCC BAA-1114 / GMI1000) (Ralstonia solanacearum).